The chain runs to 70 residues: Conotoxin TsMLKM-011 (70 aa).

Residues M1–A24 form the signal peptide. Residues D25–R54 constitute a propeptide that is removed on maturation. 3 disulfides stabilise this stretch: C56-C66, C57-C68, and C62-C69.

This sequence belongs to the conotoxin M superfamily. In terms of tissue distribution, expressed by the venom duct.

It localises to the secreted. The chain is Conotoxin TsMLKM-011 from Conus tessulatus (Tessellate cone).